Reading from the N-terminus, the 259-residue chain is uncharacterized protein (259 aa).

Disordered regions lie at residues 22 to 68 (GLQP…VSFG), 111 to 133 (REEQKLRKRSRQNDDGSDDDEVE), and 181 to 202 (LGGKKETEKMPMAARRGMKKKQ). The segment covering 50-63 (NEEEDAISDMEDKE) has biased composition (acidic residues). Phosphoserine is present on serine 127.

This is an uncharacterized protein from Schizosaccharomyces pombe (strain 972 / ATCC 24843) (Fission yeast).